Here is a 226-residue protein sequence, read N- to C-terminus: Large ribosomal subunit protein uL3 (226 aa).

Positions 136-162 (NFGSQRASHGNSRSHNVPGSISMAQDP) are disordered. The segment covering 137–158 (FGSQRASHGNSRSHNVPGSISM) has biased composition (polar residues). The residue at position 160 (glutamine 160) is an N5-methylglutamine.

Belongs to the universal ribosomal protein uL3 family. As to quaternary structure, part of the 50S ribosomal subunit. Forms a cluster with proteins L14 and L19. Methylated by PrmB.

One of the primary rRNA binding proteins, it binds directly near the 3'-end of the 23S rRNA, where it nucleates assembly of the 50S subunit. The protein is Large ribosomal subunit protein uL3 of Methylibium petroleiphilum (strain ATCC BAA-1232 / LMG 22953 / PM1).